The sequence spans 402 residues: Thyroid hormone receptor alpha (402 aa).

Residues 1–22 (MEQKPSTLDPLSEPEDTRWLDG) are disordered. A modulating region spans residues 1–50 (MEQKPSTLDPLSEPEDTRWLDGKRKRKSSQCLVKSSMSGYIPSYLDKDEQ). Serine 12 is subject to Phosphoserine; by CK2. At serine 28 the chain carries Phosphoserine. Zn(2+)-binding residues include cysteine 51, cysteine 54, cysteine 68, cysteine 71, cysteine 89, cysteine 95, cysteine 105, and cysteine 108. 2 consecutive NR C4-type zinc fingers follow at residues 51–71 (CVVC…CEGC) and 89–113 (CKYD…FKKC). The segment at residues 51–125 (CVVCGDKATG…VGMAMDLVLD (75 aa)) is a DNA-binding region (nuclear receptor). Positions 161-402 (EEWELIHVVT…ELFPPLFLEV (242 aa)) constitute an NR LBD domain. 3,3',5-triiodo-L-thyronine contacts are provided by arginine 226 and serine 275.

Belongs to the nuclear hormone receptor family. NR1 subfamily. In terms of assembly, probably interacts with SFPQ.

It is found in the nucleus. Nuclear hormone receptor that can act as a repressor or activator of transcription. High affinity receptor for thyroid hormones, including triiodothyronine and thyroxine. This chain is Thyroid hormone receptor alpha (THRA), found in Aptenodytes patagonicus (King penguin).